Reading from the N-terminus, the 558-residue chain is MNIDVVLLLEQNPILLIFVVLAIGLSFGKIRFGSFQLGNSIGVLITSLIMGHLGFSFTPEALTIGFMLFIYCVGIEAGPNFFGIFFRDGKHYLILSLVVLITATWIAYFGGYYLNLDYGLAAGMMAGALTSTPVLVGAQDALNSGLAAVPRHMDLSLILDNVSVGYAMAYLIGLISMIMFAKLLPKLQKQNLSDSAQQIAQERGLGSQRKVYLPIIRAYRVGPELINWIDGRNLRELGIYRQTGCYIERIRRHGILAHPDGDAILQEGDEIALVGFPDSHARLDPSFRNGKEVFDRNLLDLRISEEEIVVKSDSIAGKRLSDLNLSEYGCFLNRVVRAQIEMPMDLDIVLAKGDVLQVSGEKSKVKGLADKIGFISVHSQMADLLAFCSFFILGILFGLVTMTFGQVSFSLGNAVGLLLSGITLGFLRANHPTFGYVPQGALNMVKDLGLAIFMVGIGLNAGSKMFQHLSEVGVQVIGLAFLVSVVPVVFAYLVGAYILKMNRALLFGAIIGARTCAPAMDVVNEYAKSTIPALGYAGTYAIANILMTLTGTIFILLS.

The next 5 membrane-spanning stretches (helical) occupy residues 5-25, 37-57, 66-86, 92-112, and 164-184; these read VVLL…AIGL, LGNS…GFSF, FMLF…GIFF, YLIL…FGGY, and VGYA…AKLL. RCK C-terminal domains follow at residues 203–290 and 291–374; these read RGLG…FRNG and KEVF…KIGF. Helical transmembrane passes span 384–404, 407–427, 441–461, 476–496, 504–524, and 537–557; these read LLAF…TMTF, VSFS…LGFL, ALNM…GLNA, VIGL…LVGA, ALLF…DVVN, and AGTY…FILL.

The protein belongs to the AAE transporter (TC 2.A.81) family. YbjL subfamily.

The protein localises to the cell membrane. In Vibrio cholerae serotype O1 (strain ATCC 39541 / Classical Ogawa 395 / O395), this protein is Putative transport protein VC0395_A0715/VC395_1212.